The chain runs to 409 residues: Probable plastid-lipid-associated protein 12, chloroplastic (409 aa).

Residues 1-55 (MVAVRFYAVEMSLPCLCPCPSSPISLSLCSPRFNLLNTTSRRLGLSRNCRTLRIS) constitute a chloroplast transit peptide.

Belongs to the PAP/fibrillin family.

The protein resides in the plastid. Its subcellular location is the chloroplast thylakoid. This is Probable plastid-lipid-associated protein 12, chloroplastic (PAP12) from Arabidopsis thaliana (Mouse-ear cress).